The primary structure comprises 86 residues: Apolipoprotein C-I (86 aa).

A signal peptide spans 1 to 26 (MRLFLSLPVLVVALLTILEGPGPAQG).

This sequence belongs to the apolipoprotein C1 family.

It is found in the secreted. In terms of biological role, inhibitor of lipoprotein binding to the low density lipoprotein (LDL) receptor, LDL receptor-related protein, and very low density lipoprotein (VLDL) receptor. Associates with high density lipoproteins (HDL) and the triacylglycerol-rich lipoproteins in the plasma and makes up about 10% of the protein of the VLDL and 2% of that of HDL. Appears to interfere directly with fatty acid uptake and is also the major plasma inhibitor of cholesteryl ester transfer protein (CETP). Binds free fatty acids and reduces their intracellular esterification. Modulates the interaction of APOE with beta-migrating VLDL and inhibits binding of beta-VLDL to the LDL receptor-related protein. The polypeptide is Apolipoprotein C-I (APOC1) (Plecturocebus moloch (Dusky titi monkey)).